We begin with the raw amino-acid sequence, 533 residues long: Putative phosphate permease jhp_1384 (533 aa).

The next 12 helical transmembrane spans lie at 23 to 43 (IALA…FGQA), 47 to 67 (GLLL…IGAN), 81 to 101 (AISM…GAII), 129 to 149 (VMLA…LIGA), 156 to 176 (SVVG…AINW), 182 to 202 (IVAS…FFLM), 221 to 241 (VVPY…IVKV), 248 to 268 (VGFE…FILF), 286 to 306 (VNEL…FAHG), 338 to 358 (VPLW…SLYG), 372 to 392 (LDKM…LLAS), and 509 to 529 (LVTV…LGFI).

This sequence belongs to the inorganic phosphate transporter (PiT) (TC 2.A.20) family.

Its subcellular location is the cell membrane. Functionally, potential transporter for phosphate. The chain is Putative phosphate permease jhp_1384 from Helicobacter pylori (strain J99 / ATCC 700824) (Campylobacter pylori J99).